The following is a 536-amino-acid chain: CBS domain-containing protein CBSCBSPB2 (536 aa).

Positions 1 to 23 (MTTTPTSSGRRSISSIRRTSSAS) are enriched in low complexity. Positions 1-60 (MTTTPTSSGRRSISSIRRTSSASKKPVLQSEESESGSGSINENTSKPDSPLAQPVSDGER) are disordered. 4 CBS domains span residues 66–124 (RLSK…LRPE), 132–187 (MTRN…RMEK), 228–287 (VTEN…LSPE), and 295–354 (MTPN…NNSS). Residues 406–489 (VSSFAFKFED…KVLRLHLDFT (84 aa)) form the PB1 domain. A helical membrane pass occupies residues 509–529 (VWWQTGVLAGAIVLTSIGLFV).

Its subcellular location is the membrane. This Arabidopsis thaliana (Mouse-ear cress) protein is CBS domain-containing protein CBSCBSPB2 (CBSCBSPB2).